Reading from the N-terminus, the 253-residue chain is Sulfate transporter CysZ (253 aa).

4 helical membrane passes run 31–51, 75–95, 151–171, and 222–242; these read FVILPLLVNILLMGGAFWWLF, LLWPIAVISVLLVFGYFFSTI, IVLLILYFIPGVGQTVAPVLW, and IPVLNLVIMPVAVCGATAMWV.

This sequence belongs to the CysZ family.

The protein resides in the cell inner membrane. Functionally, high affinity, high specificity proton-dependent sulfate transporter, which mediates sulfate uptake. Provides the sulfur source for the cysteine synthesis pathway. The sequence is that of Sulfate transporter CysZ from Citrobacter koseri (strain ATCC BAA-895 / CDC 4225-83 / SGSC4696).